The chain runs to 281 residues: NADH--cytochrome b5 reductase 1 (281 aa).

A helical transmembrane segment spans residues 13–33 (ILLGVFVAFVAVGAGAAYFLT). An AKR2A-binding sequence (ABS) required for mitochondrion outer membrane targeting motif is present at residues 34-40 (SSKKRRV). The region spanning 45 to 149 (ENFKEFKLVK…KGPKGRFKYQ (105 aa)) is the FAD-binding FR-type domain. FAD-binding positions include 129–144 (REMR…GPKG) and 155–187 (AFGM…KVHL). Phosphothreonine is present on Thr-166.

It belongs to the flavoprotein pyridine nucleotide cytochrome reductase family. As to quaternary structure, monomer. Interacts with AKR2A. FAD is required as a cofactor. As to expression, expressed in roots, stems, flowers and siliques. Detected in leaves.

The protein resides in the mitochondrion outer membrane. The catalysed reaction is 2 Fe(III)-[cytochrome b5] + NADH = 2 Fe(II)-[cytochrome b5] + NAD(+) + H(+). Its function is as follows. Reductase transferring electrons from NADH to cytochrome b5. Required for the NADH-dependent electron transfer involved in the desaturation and hydroxylation of fatty acids and in the desaturation of sterol precursors. No activity with NADPH as electron donor. This is NADH--cytochrome b5 reductase 1 from Arabidopsis thaliana (Mouse-ear cress).